The sequence spans 467 residues: Chromosomal replication initiator protein DnaA (467 aa).

The domain I, interacts with DnaA modulators stretch occupies residues 1-80; that stretch reads MTSELWHQCL…APRISLKIGS (80 aa). The domain II stretch occupies residues 80 to 130; that stretch reads SITGNSKGQQASKDSAVGATRTTAPSRPVIADVAPSGERNVTVEGAIKHES. The segment at 131-347 is domain III, AAA+ region; it reads YLNPTFTFET…GALKLVIANA (217 aa). 4 residues coordinate ATP: Gly-175, Gly-177, Lys-178, and Thr-179. The segment at 348 to 467 is domain IV, binds dsDNA; the sequence is HFTGQEITPA…YQNFMRMLTS (120 aa).

The protein belongs to the DnaA family. As to quaternary structure, oligomerizes as a right-handed, spiral filament on DNA at oriC.

It localises to the cytoplasm. Functionally, plays an essential role in the initiation and regulation of chromosomal replication. ATP-DnaA binds to the origin of replication (oriC) to initiate formation of the DNA replication initiation complex once per cell cycle. Binds the DnaA box (a 9 base pair repeat at the origin) and separates the double-stranded (ds)DNA. Forms a right-handed helical filament on oriC DNA; dsDNA binds to the exterior of the filament while single-stranded (ss)DNA is stabiized in the filament's interior. The ATP-DnaA-oriC complex binds and stabilizes one strand of the AT-rich DNA unwinding element (DUE), permitting loading of DNA polymerase. After initiation quickly degrades to an ADP-DnaA complex that is not apt for DNA replication. Binds acidic phospholipids. The polypeptide is Chromosomal replication initiator protein DnaA (Hahella chejuensis (strain KCTC 2396)).